Reading from the N-terminus, the 500-residue chain is TBC1 domain family member 10A (500 aa).

The span at 1-10 shows a compositional bias: basic and acidic residues; it reads MAKSSRENGP. The interval 1-45 is disordered; that stretch reads MAKSSRENGPREPAAGGSLSGTRESLAQGPDAATADELSSLGSDS. Residues Ser-39, Ser-40, and Ser-45 each carry the phosphoserine modification. The Rab-GAP TBC domain maps to 111–299; sequence GIPPSLRGRA…RVWDMFFCEG (189 aa). 2 disordered regions span residues 396-415 and 420-500; these read AEPG…LPPD and SSKA…DTYL. Residue Ser-407 is modified to Phosphoserine. Residues 438-453 are compositionally biased toward polar residues; that stretch reads TSAQLDKSPGLSQATV. Phosphothreonine is present on Thr-477. Residues 497-500 are binding to the PDZ domain of EBP50; that stretch reads DTYL.

Binds to the first PDZ domain of NHERF1 and NHERF2. In terms of tissue distribution, expressed in most tissues, except for skeletal muscle.

It localises to the cell projection. The protein resides in the microvillus. GTPase-activating protein (GAP) specific for RAB27A and RAB35. Does not show GAP activity for RAB2A, RAB3A and RAB4A. This chain is TBC1 domain family member 10A (Tbc1d10a), found in Mus musculus (Mouse).